Consider the following 522-residue polypeptide: MNSFFGTPAASWCLLESDVSSAPDKEAGRERRALSVQQRGGPAWSGSLEWSRQSAGDRRRLGLSRQTAKSSWSRSRDRTCCCRRAWWILVPAADRARRERFIMNEKWDTNSSENWHPIWNVNDTKHHLYSDINITYVNYYLHQPQVAAIFIISYFLIFFLCMMGNTVVCFIVMRNKHMHTVTNLFILNLAISDLLVGIFCMPITLLDNIIAGWPFGNTMCKISGLVQGISVAASVFTLVAIAVDRFQCVVYPFKPKLTIKTAFVIIMIIWVLAITIMSPSAVMLHVQEEKYYRVRLNSQNKTSPVYWCREDWPNQEMRKIYTTVLFANIYLAPLSLIVIMYGRIGISLFRAAVPHTGRKNQEQWHVVSRKKQKIIKMLLIVALLFILSWLPLWTLMMLSDYADLSPNELQIINIYIYPFAHWLAFGNSSVNPIIYGFFNENFRRGFQEAFQLQLCQKRAKPMEAYALKAKSHVLINTSNQLVQESTFQNPHGETLLYRKSAEKPQQELVMEELKETTNSSEI.

Residues 1–147 (MNSFFGTPAA…NYYLHQPQVA (147 aa)) lie on the Extracellular side of the membrane. The interval 25-49 (KEAGRERRALSVQQRGGPAWSGSLE) is disordered. N-linked (GlcNAc...) asparagine glycosylation is found at asparagine 110, asparagine 122, and asparagine 133. Residues 148–168 (AIFIISYFLIFFLCMMGNTVV) traverse the membrane as a helical segment. The Cytoplasmic portion of the chain corresponds to 169-184 (CFIVMRNKHMHTVTNL). Residues 185–205 (FILNLAISDLLVGIFCMPITL) traverse the membrane as a helical segment. Topologically, residues 206–221 (LDNIIAGWPFGNTMCK) are extracellular. The cysteines at positions 220 and 308 are disulfide-linked. The helical transmembrane segment at 222–242 (ISGLVQGISVAASVFTLVAIA) threads the bilayer. The Cytoplasmic segment spans residues 243-262 (VDRFQCVVYPFKPKLTIKTA). Residues 263–283 (FVIIMIIWVLAITIMSPSAVM) traverse the membrane as a helical segment. Residues 284–319 (LHVQEEKYYRVRLNSQNKTSPVYWCREDWPNQEMRK) lie on the Extracellular side of the membrane. Asparagine 300 carries an N-linked (GlcNAc...) asparagine glycan. Residues 320-340 (IYTTVLFANIYLAPLSLIVIM) form a helical membrane-spanning segment. Residues 341–377 (YGRIGISLFRAAVPHTGRKNQEQWHVVSRKKQKIIKM) lie on the Cytoplasmic side of the membrane. Residues 378 to 398 (LLIVALLFILSWLPLWTLMML) form a helical membrane-spanning segment. Over 399 to 413 (SDYADLSPNELQIIN) the chain is Extracellular. The chain crosses the membrane as a helical span at residues 414-434 (IYIYPFAHWLAFGNSSVNPII). The Cytoplasmic segment spans residues 435 to 522 (YGFFNENFRR…LKETTNSSEI (88 aa)).

This sequence belongs to the G-protein coupled receptor 1 family. As to expression, isoform 1 is abundant in placenta. Relatively highly expressed in thymus, testis, and small intestine. Expressed at low levels in several tissues including spleen, prostate, brain, heart, ovary, colon, kidney, lung, liver and pancreas and not expressed in skeletal muscle and leukocytes. Isoform 2 expression is highest in placenta (but at relatively low level compared to isoform 1). Very low level of expression in numerous tissues including adipose tissue and many brain regions. Isoform 3 is expressed in brain and heart and, at lower levels, in kidney, liver, lung and pancreas.

Its subcellular location is the cell membrane. Its function is as follows. Receptor for NPAF (A-18-F-amide) and NPFF (F-8-F-amide) neuropeptides, also known as morphine-modulating peptides. Can also be activated by a variety of naturally occurring or synthetic FMRF-amide like ligands. This receptor mediates its action by association with G proteins that activate a phosphatidylinositol-calcium second messenger system. The polypeptide is Neuropeptide FF receptor 2 (Homo sapiens (Human)).